Here is a 282-residue protein sequence, read N- to C-terminus: Bifunctional protein FolD (282 aa).

NADP(+) contacts are provided by residues 165-167 (GRG), Thr-192, and Val-233.

This sequence belongs to the tetrahydrofolate dehydrogenase/cyclohydrolase family. As to quaternary structure, homodimer.

It carries out the reaction (6R)-5,10-methylene-5,6,7,8-tetrahydrofolate + NADP(+) = (6R)-5,10-methenyltetrahydrofolate + NADPH. The catalysed reaction is (6R)-5,10-methenyltetrahydrofolate + H2O = (6R)-10-formyltetrahydrofolate + H(+). It functions in the pathway one-carbon metabolism; tetrahydrofolate interconversion. Catalyzes the oxidation of 5,10-methylenetetrahydrofolate to 5,10-methenyltetrahydrofolate and then the hydrolysis of 5,10-methenyltetrahydrofolate to 10-formyltetrahydrofolate. The chain is Bifunctional protein FolD from Mycobacterium leprae (strain Br4923).